The following is a 426-amino-acid chain: Mitogen-activated protein kinase 8 (426 aa).

The 296-residue stretch at Tyr-26 to Ile-321 folds into the Protein kinase domain. Residues Gly-33–Gly-38 and Lys-55 each bind ATP. Asp-151 functions as the Proton acceptor in the catalytic mechanism. Residue Thr-183 is modified to Phosphothreonine. The TXY motif lies at Thr-183–Tyr-185. The residue at position 185 (Tyr-185) is a Phosphotyrosine. Residues Gln-375–Arg-426 are disordered. Low complexity predominate over residues Thr-384–Asp-404. Residues Pro-405–Gly-420 show a composition bias toward polar residues.

It belongs to the protein kinase superfamily. CMGC Ser/Thr protein kinase family. MAP kinase subfamily. Mg(2+) serves as cofactor. Dually phosphorylated on Thr-183 and Tyr-185, which activates the enzyme. In terms of tissue distribution, strongly expressed in presumptive ectoderm and mesoderm regions and weakly expressed in endoderm regions during early stages of embryo development. Expressed in the head and dorsal regions during neurula and tailbud stages.

Its subcellular location is the cytoplasm. It is found in the nucleus. The protein localises to the synapse. The enzyme catalyses L-seryl-[protein] + ATP = O-phospho-L-seryl-[protein] + ADP + H(+). The catalysed reaction is L-threonyl-[protein] + ATP = O-phospho-L-threonyl-[protein] + ADP + H(+). Activated by threonine and tyrosine phosphorylation, potentially by the dual-specificity kinase, MKK7. Indirectly activated by Wnt5a. Its function is as follows. Responds to activation by environmental stress and pro-inflammatory cytokines by phosphorylating a number of transcription factors, and thus regulating transcriptional activity. Regulates morphogenic cell movements, controlling convergent extension during gastrulation. May play a role in the regulation of the circadian clock. The sequence is that of Mitogen-activated protein kinase 8 (mapk8) from Xenopus laevis (African clawed frog).